We begin with the raw amino-acid sequence, 211 residues long: Arginine exporter protein ArgO (211 aa).

The next 6 membrane-spanning stretches (helical) occupy residues 1–21 (MFSY…PLGP), 37–57 (IMIA…GIFG), 68–88 (LLAL…FGAF), 111–131 (IIAT…DTFV), 147–167 (WFAL…AILA), and 182–202 (IINL…ARDG).

It belongs to the LysE/ArgO transporter (TC 2.A.75) family.

The protein resides in the cell inner membrane. It catalyses the reaction L-arginine(in) = L-arginine(out). Its function is as follows. Involved in the export of arginine. Important to control the intracellular level of arginine and the correct balance between arginine and lysine. In Escherichia coli O157:H7, this protein is Arginine exporter protein ArgO.